The chain runs to 473 residues: MGYAMSRFETDVSVIFSSSSDSETSHDSLINKPVKNLDHEIAQLTRLRSAPHENLSRDLLVKRVLPLSTMKMLAGREANVSGRGRFSSADCCHVVSRHLPVNDPCVVDQMTSRVYLSQFSTDGSLFIAGFQGCHIRIYNVDKGWKVQNDIIAKCVRWTITDASLSPDQKFLAYASLTPIAHIVKFGSAATESHANVTDIHDGLDFSSNDDGGYSFGVFSIKFSTDGREIVAGTSDESICVYDLEADRLSLRISAHESDVNSVCFADESGHLIYSGSDDNLCKVWDRRCFNAKGKPAGILMGHLEGITFIDSRGDGRYFISNGKDQTIKLWDIRKMSSNAGGTIQSRNSEWDYRWMEYPQEARDLKHPSDLSGATYKGHSVLCTLIRCYFSPDYSTGQKYIYTGSHDANVYIYDLVTGDQVSTLQYHKATVRDCSWHPNYPMLVSSSFDGEIVKWEYRGNDEAPVQGNNQRLQR.

WD repeat units lie at residues 212–242 (GYSF…CVYD), 254–285 (AHES…KVWD), 301–331 (GHLE…KLWD), 377–413 (GHSV…YIYD), and 425–455 (YHKA…VKWE).

It belongs to the WD repeat LEC14B family.

This is LEC14B protein from Lithospermum erythrorhizon (Purple gromwell).